Here is a 253-residue protein sequence, read N- to C-terminus: Dehydration-responsive element-binding protein 1D (253 aa).

Positions 1–22 (MEKNTAASGQLMTSSAEATPSS) are enriched in polar residues. The segment at 1-31 (MEKNTAASGQLMTSSAEATPSSPKRPAGRTK) is disordered. Positions 39–98 (VFRGVRWRGCAGRWVCKVRVPGSRGDRFWIGTSDTAEETARTHDAAMLALCGASASLNFA) form a DNA-binding region, AP2/ERF. Residues 131–153 (RRVPAPGRGSTATATATSGDAAS) are disordered. Low complexity predominate over residues 134-153 (PAPGRGSTATATATSGDAAS).

It belongs to the AP2/ERF transcription factor family. ERF subfamily.

The protein localises to the nucleus. In terms of biological role, transcriptional activator that binds specifically to the DNA sequence 5'-[AG]CCGAC-3'. Binding to the C-repeat/DRE element mediates high salinity- and dehydration-inducible transcription. This is Dehydration-responsive element-binding protein 1D (DREB1D) from Oryza sativa subsp. indica (Rice).